The chain runs to 173 residues: Large ribosomal subunit protein bL9 (173 aa).

Residues 150–173 form a disordered region; it reads KQEDKKSLSKKLNKADEQGERAEV.

It belongs to the bacterial ribosomal protein bL9 family.

Binds to the 23S rRNA. This chain is Large ribosomal subunit protein bL9, found in Borreliella burgdorferi (strain ZS7) (Borrelia burgdorferi).